The chain runs to 190 residues: Xanthine phosphoribosyltransferase (190 aa).

Residues Leu20 and Asn27 each contribute to the xanthine site. Residue 128 to 132 (ANGHA) participates in 5-phospho-alpha-D-ribose 1-diphosphate binding. Lys156 contributes to the xanthine binding site.

It belongs to the purine/pyrimidine phosphoribosyltransferase family. Xpt subfamily. Homodimer.

The protein resides in the cytoplasm. It carries out the reaction XMP + diphosphate = xanthine + 5-phospho-alpha-D-ribose 1-diphosphate. It functions in the pathway purine metabolism; XMP biosynthesis via salvage pathway; XMP from xanthine: step 1/1. In terms of biological role, converts the preformed base xanthine, a product of nucleic acid breakdown, to xanthosine 5'-monophosphate (XMP), so it can be reused for RNA or DNA synthesis. This Ectopseudomonas mendocina (strain ymp) (Pseudomonas mendocina) protein is Xanthine phosphoribosyltransferase.